Consider the following 370-residue polypeptide: Tyrosine-protein kinase transforming protein SEA (370 aa).

One can recognise a Protein kinase domain in the interval 60-323 (THRSRVIGRG…GLVCELERVL (264 aa)). ATP is bound by residues 66 to 74 (IGRGHFGSV) and Lys92. The active-site Proton acceptor is Asp186. Tyr216 bears the Phosphotyrosine; by autocatalysis mark. A disordered region spans residues 345–370 (PPFPPAPRGQLPDSEDEEDEEEEVAE). Residues 357-370 (DSEDEEDEEEEVAE) show a composition bias toward acidic residues.

It belongs to the protein kinase superfamily. Tyr protein kinase family.

It catalyses the reaction L-tyrosyl-[protein] + ATP = O-phospho-L-tyrosyl-[protein] + ADP + H(+). The sequence is that of Tyrosine-protein kinase transforming protein SEA (V-SEA) from Galliformes.